Consider the following 319-residue polypeptide: Acetyl-coenzyme A carboxylase carboxyl transferase subunit alpha (319 aa).

The CoA carboxyltransferase C-terminal domain maps to 35–296 (DLDKEIEQLE…KATLLRQLED (262 aa)).

Belongs to the AccA family. In terms of assembly, acetyl-CoA carboxylase is a heterohexamer composed of biotin carboxyl carrier protein (AccB), biotin carboxylase (AccC) and two subunits each of ACCase subunit alpha (AccA) and ACCase subunit beta (AccD).

Its subcellular location is the cytoplasm. The enzyme catalyses N(6)-carboxybiotinyl-L-lysyl-[protein] + acetyl-CoA = N(6)-biotinyl-L-lysyl-[protein] + malonyl-CoA. It functions in the pathway lipid metabolism; malonyl-CoA biosynthesis; malonyl-CoA from acetyl-CoA: step 1/1. Component of the acetyl coenzyme A carboxylase (ACC) complex. First, biotin carboxylase catalyzes the carboxylation of biotin on its carrier protein (BCCP) and then the CO(2) group is transferred by the carboxyltransferase to acetyl-CoA to form malonyl-CoA. In Vibrio parahaemolyticus serotype O3:K6 (strain RIMD 2210633), this protein is Acetyl-coenzyme A carboxylase carboxyl transferase subunit alpha.